Consider the following 387-residue polypeptide: Succinate--CoA ligase [ADP-forming] subunit beta (387 aa).

One can recognise an ATP-grasp domain in the interval 9 to 244; sequence KHILSKFGVN…YDEEIKEEIE (236 aa). ATP is bound by residues Lys-46, 53 to 55, Glu-99, Cys-102, and Glu-107; that span reads GRG. The Mg(2+) site is built by Asn-199 and Asp-213. Residues Asn-264 and 321-323 each bind substrate; that span reads GIM.

Belongs to the succinate/malate CoA ligase beta subunit family. Heterotetramer of two alpha and two beta subunits. It depends on Mg(2+) as a cofactor.

It catalyses the reaction succinate + ATP + CoA = succinyl-CoA + ADP + phosphate. It carries out the reaction GTP + succinate + CoA = succinyl-CoA + GDP + phosphate. It participates in carbohydrate metabolism; tricarboxylic acid cycle; succinate from succinyl-CoA (ligase route): step 1/1. Its function is as follows. Succinyl-CoA synthetase functions in the citric acid cycle (TCA), coupling the hydrolysis of succinyl-CoA to the synthesis of either ATP or GTP and thus represents the only step of substrate-level phosphorylation in the TCA. The beta subunit provides nucleotide specificity of the enzyme and binds the substrate succinate, while the binding sites for coenzyme A and phosphate are found in the alpha subunit. In Ehrlichia chaffeensis (strain ATCC CRL-10679 / Arkansas), this protein is Succinate--CoA ligase [ADP-forming] subunit beta.